The chain runs to 460 residues: ATP synthase subunit beta (460 aa).

150 to 157 contacts ATP; it reads GGAGVGKT.

This sequence belongs to the ATPase alpha/beta chains family. In terms of assembly, F-type ATPases have 2 components, CF(1) - the catalytic core - and CF(0) - the membrane proton channel. CF(1) has five subunits: alpha(3), beta(3), gamma(1), delta(1), epsilon(1). CF(0) has three main subunits: a(1), b(2) and c(9-12). The alpha and beta chains form an alternating ring which encloses part of the gamma chain. CF(1) is attached to CF(0) by a central stalk formed by the gamma and epsilon chains, while a peripheral stalk is formed by the delta and b chains.

Its subcellular location is the cell inner membrane. The catalysed reaction is ATP + H2O + 4 H(+)(in) = ADP + phosphate + 5 H(+)(out). In terms of biological role, produces ATP from ADP in the presence of a proton gradient across the membrane. The catalytic sites are hosted primarily by the beta subunits. This chain is ATP synthase subunit beta, found in Salmonella paratyphi A (strain ATCC 9150 / SARB42).